The sequence spans 1095 residues: Tyrosine-sulfated glycopeptide receptor 1 (1095 aa).

The chain crosses the membrane as a helical span at residues 23-43 (PHMVLFVLLYVLSISVFFLTV). Residues N62 and N73 are each glycosylated (N-linked (GlcNAc...) asparagine). LRR repeat units follow at residues 91–115 (ENRVTSIILSSRGLSGNLPSSVLDL), 116–139 (QRLSRLDLSHNRLSGPLPPGFLSA), 141–165 (DQLLVLDLSYNSFKGELPLQQSFGN), 170–195 (IFPIQTVDLSSNLLEGEILSSSVFLQ), 197–221 (AFNLTSFNVSNNSFTGSIPSFMCTA), 223–246 (PQLTKLDFSYNDFSGDLSQELSRC), 247–270 (SRLSVLRAGFNNLSGEIPKEIYNL), 271–294 (PELEQLFLPVNRLSGKIDNGITRL), 295–318 (TKLTLLELYSNHIEGEIPKDIGKL), 320–342 (KLSSLQLHVNNLMGSIPVSLANC), 344–366 (KLVKLNLRVNQLGGTLSAIDFSR), 367–391 (FQSLSILDLGNNSFTGEFPSTVYSC), 393–415 (MMTAMRFAGNKLTGQISPQVLEL), 416–439 (ESLSFFTFSDNKMTNLTGALSILQ), 441–466 (CKKLSTLIMAKNFYDETVPSNKDFLR), 470–494 (FPSLQIFGIGACRLTGEIPAWLIKL), 495–517 (QRVEVMDLSMNRFVGTIPGWLGT), 518–542 (LPDLFYLDLSDNFLTGELPKELFQL), and 566–589 (NPNNVTTNQQYNQLSSLPPTIYIK). N165 carries an N-linked (GlcNAc...) asparagine glycan. N199, N204, and N207 each carry an N-linked (GlcNAc...) asparagine glycan. N258 carries an N-linked (GlcNAc...) asparagine glycan. Residue N341 is glycosylated (N-linked (GlcNAc...) asparagine). N-linked (GlcNAc...) asparagine glycosylation occurs at N377. N-linked (GlcNAc...) asparagine glycosylation is present at N430. N569, N592, N616, N627, N640, N662, and N714 each carry an N-linked (GlcNAc...) asparagine glycan. LRR repeat units follow at residues 604 to 628 (LKVLHILELLGNNFSGSIPDELSNL), 629 to 652 (TNLERLDLSNNNLSGRIPWSLTGL), and 654 to 677 (FLSYFNVANNTLSGPIPTGTQFDT). Residues 721-741 (LVLGLFFGVSLILVLLALLVL) form a helical membrane-spanning segment. Phosphothreonine occurs at positions 792 and 800. One can recognise a Protein kinase domain in the interval 803–1074 (FSQANIIGCG…PNIQQVVDWL (272 aa)). Residues 809-817 (IGCGGFGLV) and K831 contribute to the ATP site. 2 positions are modified to phosphotyrosine: Y876 and Y916. Catalysis depends on D929, which acts as the Proton acceptor. At Y971 the chain carries Phosphotyrosine.

It belongs to the protein kinase superfamily. Ser/Thr protein kinase family. Homo- and heterodimers with PSKR1. Interacts (via C-terminus) with AHA1 and AHA2 (via the R-domain). Autophosphorylated. As to expression, expressed ubiquitously, including in the shoot apical meristem and in the elongation zone of the root meristem.

The protein resides in the cell membrane. It catalyses the reaction L-seryl-[protein] + ATP = O-phospho-L-seryl-[protein] + ADP + H(+). The enzyme catalyses L-threonyl-[protein] + ATP = O-phospho-L-threonyl-[protein] + ADP + H(+). Functionally, tyrosine-sulfated glycopeptide receptor with a serine/threonine-protein kinase activity. Regulates, in response to tyrosine-sulfated glycopeptide binding, a signaling cascade involved in cellular proliferation and plant growth. Not involved in PSK perception. Involved in plant immunity, with antagonistic effects on bacterial and fungal resistances. Mediates activation of the plasma membrane H(+)-ATPase by PSY1. Phosphorylates AHA2 at Thr-881. In Arabidopsis thaliana (Mouse-ear cress), this protein is Tyrosine-sulfated glycopeptide receptor 1.